The chain runs to 395 residues: uncharacterized protein (395 aa).

7 helical membrane passes run 42–62 (LKYVLVYLLSIINAFLLLIFI), 67–87 (LYSFGISSLTQGFARLVFVLL), 97–117 (LIFNILYWLLYVFINIPLIIF), 128–148 (ILSTHFVVASNVFGFLISIIP), 196–216 (FIYAAIYGFYNGISVSLLYIL), 241–261 (ILFYVNSFILIIAILIGSFVA), and 281–301 (LFFSPNLIATFFSILLTGTVV).

It is found in the cell membrane. This is an uncharacterized protein from Mycoplasma genitalium (strain ATCC 33530 / DSM 19775 / NCTC 10195 / G37) (Mycoplasmoides genitalium).